The chain runs to 1321 residues: Bile salt export pump (1321 aa).

Residues 1–62 (MSDSVILRSV…FSSSKDIWLM (62 aa)) lie on the Cytoplasmic side of the membrane. Positions 62–385 (MLMGGVCALL…ASSCLEIFST (324 aa)) constitute an ABC transmembrane type-1 1 domain. Residues 63–83 (LMGGVCALLHGMAQPGILIIF) traverse the membrane as a helical segment. The Extracellular portion of the chain corresponds to 84–147 (GIMTDIFIKY…MIKFSGIYAG (64 aa)). N-linked (GlcNAc...) asparagine glycans are attached at residues Asn109, Asn116, Asn122, and Asn125. A helical membrane pass occupies residues 148–168 (VGMTVLILGYFQIRLWVITGA). Residues 169 to 215 (RQIRRMRKIYFRRIMRMEIGWFDCTSVGELNSRFADDIEKINDAIAD) are Cytoplasmic-facing. Residues 216 to 236 (QLAHFLQRMSTAMCGLLLGFY) form a helical membrane-spanning segment. The Extracellular portion of the chain corresponds to 237–240 (RGWK). A helical membrane pass occupies residues 241–261 (LTLVILAVSPLIGIGAAVIGL). The Cytoplasmic portion of the chain corresponds to 262 to 319 (SIAKFTELELKAYAKAGSIADEVLSSIRTVAAFGGENKEVERYEKNLVFAQRWGIWKG). Residues 320 to 340 (MVMGFFTGYMWCLIFFCYALA) form a helical membrane-spanning segment. Residues 341 to 353 (FWYGSTLVLDEEE) are Extracellular-facing. Residues 354 to 374 (YTPGTLVQIFLCVILAAMNIG) traverse the membrane as a helical segment. Residues 375–755 (HASSCLEIFS…KYNIPEWHYI (381 aa)) lie on the Cytoplasmic side of the membrane. An ABC transporter 1 domain is found at 420 to 656 (IEFHNVTFHY…KGVYFMLVTL (237 aa)). ATP is bound at residue 455 to 462 (GSSGAGKS). The residue at position 586 (Thr586) is a Phosphothreonine. At Ser587 the chain carries Phosphoserine. Residues 651-674 (FMLVTLQSQGDNAHKETSIMGKDA) are interaction with HAX1. A phosphoserine mark is found at Ser692, Ser703, and Ser706. Residues 755–1043 (ILVGSLSAAI…TFSYTPSYAK (289 aa)) enclose the ABC transmembrane type-1 2 domain. The chain crosses the membrane as a helical span at residues 756-776 (LVGSLSAAINGAVTPIYSLLF). The Extracellular portion of the chain corresponds to 777–794 (SQLLGTFSLLDKEQQRSE). A helical membrane pass occupies residues 795 to 815 (IHSMCLFFVILGCVSIFTQFL). Topologically, residues 816-869 (QGYTFAKSGELLTKRLRKFGFKAMLGQDIGWFDDLRNNPGVLTTRLATDASQVQ) are cytoplasmic. 2 consecutive transmembrane segments (helical) span residues 870–890 (GATG…IAAL) and 891–911 (LIAF…FPFL). The Cytoplasmic segment spans residues 912–979 (ALSGAVQTKM…SYKTAVRKAN (68 aa)). Residues 980–1000 (IYGLCFAFSQGIAFLANSAAY) form a helical membrane-spanning segment. Residues 1001–1011 (RYGGYLIAYEG) lie on the Extracellular side of the membrane. The helical transmembrane segment at 1012–1032 (LGFSHVFRVVSSVALSATAVG) threads the bilayer. At 1033–1321 (RTFSYTPSYA…KLVITGAPIS (289 aa)) the chain is on the cytoplasmic side. In terms of domain architecture, ABC transporter 2 spans 1078-1316 (IDFIDCKFTY…KGAYYKLVIT (239 aa)). 1113 to 1120 (GSSGCGKS) contacts ATP. A Phosphoserine modification is found at Ser1321.

The protein belongs to the ABC transporter superfamily. ABCB family. Multidrug resistance exporter (TC 3.A.1.201) subfamily. Interacts with HAX1. Interacts with the adapter protein complex 2 (AP-2) throught AP2A2 or AP2A1; this interaction regulates cell membrane expression of ABCB11 through its internalization in a clathrin-dependent manner and its subsequent degradation. Post-translationally, ubiquitinated; short-chain ubiquitination regulates cell-Surface expression of ABCB11. In terms of processing, N-glycosylated. In terms of tissue distribution, expressed predominantly, if not exclusively in the liver, where it was further localized to the canalicular microvilli and to subcanalicular vesicles of the hepatocytes by in situ.

It is found in the apical cell membrane. The protein localises to the recycling endosome membrane. It localises to the endosome. The protein resides in the cell membrane. It catalyses the reaction cholate(in) + ATP + H2O = cholate(out) + ADP + phosphate + H(+). It carries out the reaction taurocholate(in) + ATP + H2O = taurocholate(out) + ADP + phosphate + H(+). The catalysed reaction is glycocholate(in) + ATP + H2O = glycocholate(out) + ADP + phosphate + H(+). The enzyme catalyses glycochenodeoxycholate(in) + ATP + H2O = glycochenodeoxycholate(out) + ADP + phosphate + H(+). It catalyses the reaction taurochenodeoxycholate(in) + ATP + H2O = taurochenodeoxycholate(out) + ADP + phosphate + H(+). It carries out the reaction glycoursodeoxycholate(in) + ATP + H2O = glycoursodeoxycholate(out) + ADP + phosphate + H(+). The catalysed reaction is tauroursodeoxycholate(in) + ATP + H2O = tauroursodeoxycholate(out) + ADP + phosphate + H(+). The enzyme catalyses taurodeoxycholate(in) + ATP + H2O = taurodeoxycholate(out) + ADP + phosphate + H(+). It catalyses the reaction pravastatin(in) + ATP + H2O = pravastatin(out) + ADP + phosphate + H(+). Its activity is regulated as follows. The uptake of taurocholate is inhibited by taurolithocholate sulfate with an IC(50) of 52.9 uM. Pravastatin competitively inhibits the transport of taurocholic acid. Cyclosporin A, glibenclamide, rifampicin and troglitazonestrongly competitively inhibit the transport activity of taurocholate. The canalicular transport activity of taurocholate is strongly dependent on canalicular membrane cholesterol content. The uptake of taurocholate is increased by short- and medium-chain fatty acids. Cholesterol increases transport capacity of taurocholate without affecting the affinity for the substrate. Functionally, catalyzes the transport of the major hydrophobic bile salts, such as taurine and glycine-conjugated cholic acid across the canalicular membrane of hepatocytes in an ATP-dependent manner, therefore participates in hepatic bile acid homeostasis and consequently to lipid homeostasis through regulation of biliary lipid secretion in a bile salts dependent manner. Transports taurine-conjugated bile salts more rapidly than glycine-conjugated bile salts. Also transports non-bile acid compounds, such as pravastatin and fexofenadine in an ATP-dependent manner and may be involved in their biliary excretion. The sequence is that of Bile salt export pump from Rattus norvegicus (Rat).